A 502-amino-acid chain; its full sequence is Smr domain-containing protein C1235.03 (502 aa).

Positions leucine 150 to glutamate 184 are disordered. Positions histidine 157–asparagine 171 are enriched in basic residues. The region spanning serine 411–isoleucine 459 is the Smr domain.

The protein localises to the nucleus. Its subcellular location is the nucleolus. This Schizosaccharomyces pombe (strain 972 / ATCC 24843) (Fission yeast) protein is Smr domain-containing protein C1235.03.